We begin with the raw amino-acid sequence, 843 residues long: Receptor-like serine/threonine-protein kinase SD1-7 (843 aa).

Residues 1–31 form the signal peptide; it reads MRSVPNYHHSFFIFLILILFLAFSVSPNTLS. Positions 32–151 constitute a Bulb-type lectin domain; it reads ATESLTISSN…NNRLLWQSFD (120 aa). Topologically, residues 32 to 435 are extracellular; the sequence is ATESLTISSN…LEDKRIKNEK (404 aa). N-linked (GlcNAc...) asparagine glycans are attached at residues asparagine 41, asparagine 92, asparagine 116, asparagine 236, and asparagine 251. The 37-residue stretch at 286-322 folds into the EGF-like; atypical domain; it reads PKDLCDNYKVCGNFGYCDSNSLPNCYCIKGFKPVNEQ. Disulfide bonds link cysteine 290–cysteine 302, cysteine 296–cysteine 310, cysteine 372–cysteine 397, and cysteine 376–cysteine 382. A PAN domain is found at 341–422; that stretch reads CDGRDGFTRL…GGQDLYVRLA (82 aa). A glycan (N-linked (GlcNAc...) asparagine) is linked at asparagine 381. The helical transmembrane segment at 436–456 threads the bilayer; the sequence is IIGSSIGVSILLLLSFVIFHF. At 457–843 the chain is on the cytoplasmic side; sequence WKRKQKRSIT…QITLSVIDAR (387 aa). The Protein kinase domain occupies 519 to 809; it reads FSNDNKLGQG…AIPQPKRPGF (291 aa). ATP is bound by residues 525–533 and lysine 547; that span reads LGQGGFGIV. Serine 553 is modified (phosphoserine). The caM-binding stretch occupies residues 608–625; sequence TRSSNLNWQKRFDIINGI. Aspartate 644 serves as the catalytic Proton acceptor. Phosphoserine is present on residues serine 648 and serine 661. Threonine 678 carries the post-translational modification Phosphothreonine. Phosphoserine is present on serine 820.

It belongs to the protein kinase superfamily. Ser/Thr protein kinase family. As to quaternary structure, interacts with PUB9, PUB13, PUB14 and PUB38. Autophosphorylated on serine and threonine residues. As to expression, mostly expressed in leaves, and, to a lower extent, in stems and flower buds.

It localises to the cell membrane. The enzyme catalyses L-seryl-[protein] + ATP = O-phospho-L-seryl-[protein] + ADP + H(+). It catalyses the reaction L-threonyl-[protein] + ATP = O-phospho-L-threonyl-[protein] + ADP + H(+). Functionally, involved in the regulation of cellular expansion and differentiation. Mediates subcellular relocalization of PUB9 from nucleus to plasma membrane in a protein-phosphorylation-dependent manner. May be involved in the abscisic acid-mediated signaling pathway, at least during germination. This chain is Receptor-like serine/threonine-protein kinase SD1-7 (SD17), found in Arabidopsis thaliana (Mouse-ear cress).